The primary structure comprises 262 residues: Glutamate racemase (262 aa).

Substrate contacts are provided by residues 5-6 and 37-38; these read DS and YG. Cys-69 functions as the Proton donor/acceptor in the catalytic mechanism. 70–71 provides a ligand contact to substrate; sequence NT. The active-site Proton donor/acceptor is the Cys-181. 182–183 provides a ligand contact to substrate; that stretch reads TH.

It belongs to the aspartate/glutamate racemases family.

It catalyses the reaction L-glutamate = D-glutamate. Its pathway is cell wall biogenesis; peptidoglycan biosynthesis. Functionally, provides the (R)-glutamate required for cell wall biosynthesis. The polypeptide is Glutamate racemase (Buchnera aphidicola subsp. Acyrthosiphon pisum (strain APS) (Acyrthosiphon pisum symbiotic bacterium)).